We begin with the raw amino-acid sequence, 377 residues long: Protein RecA (377 aa).

82-89 (GPESSGKT) is a binding site for ATP. Residues 345 to 377 (EGSEVSANSMRPLASAARQASSRPNLSQVSANG) form a disordered region. Positions 362-377 (RQASSRPNLSQVSANG) are enriched in polar residues.

This sequence belongs to the RecA family.

The protein resides in the cytoplasm. Its function is as follows. Can catalyze the hydrolysis of ATP in the presence of single-stranded DNA, the ATP-dependent uptake of single-stranded DNA by duplex DNA, and the ATP-dependent hybridization of homologous single-stranded DNAs. It interacts with LexA causing its activation and leading to its autocatalytic cleavage. The protein is Protein RecA of Prochlorococcus marinus (strain NATL2A).